The sequence spans 395 residues: Elongation factor Tu (395 aa).

The region spanning 10-204 is the tr-type G domain; it reads KPHVNIGTIG…EVDAYIPTPE (195 aa). Positions 19–26 are G1; it reads GHVDHGKT. A GTP-binding site is contributed by 19 to 26; it reads GHVDHGKT. A Mg(2+)-binding site is contributed by T26. Residues 60–64 form a G2 region; it reads GITIS. Residues 81-84 are G3; the sequence is DCPG. GTP is bound by residues 81-85 and 136-139; these read DCPGH and NKCD. A G4 region spans residues 136-139; that stretch reads NKCD. The segment at 174 to 176 is G5; sequence SAL.

This sequence belongs to the TRAFAC class translation factor GTPase superfamily. Classic translation factor GTPase family. EF-Tu/EF-1A subfamily. Monomer.

The protein localises to the cytoplasm. The catalysed reaction is GTP + H2O = GDP + phosphate + H(+). Functionally, GTP hydrolase that promotes the GTP-dependent binding of aminoacyl-tRNA to the A-site of ribosomes during protein biosynthesis. This Bacillus cereus (strain ATCC 10987 / NRS 248) protein is Elongation factor Tu.